A 640-amino-acid chain; its full sequence is MACSTFSKPLKDKINPWGPLIILGILIRAGVSVQHDSPHKVFNVTWRVTNLMTGQTANATSLLGTMTDAFPKLYFDLCDLVGDYWDDPEPDIGDGCRTPGGRRRTRLYDFYVCPGHTVPIGCGGPGEGYCGKWGCETTGQAYWKPSSSWDLISLKRGNTPKDQGPCYDSSVSSDIKGATPGGRCNPLVLEFTDAGKKASWDGPKVWGLRLYRSTGTDPVTRFSLTRRVLNIGPRVPIGPNPVIIDQLPPSRPVQIMLPRPPQPPPPGAASIVPETAPPSQQPGTGDRLLNLVDGAYQALNLTSPDKTQECWLCLVAEPPYYEGVAVLGTYSNHTSAPTNCSVASQHKLTLSEVTGQGLCIGTVPKTHQALCNTTLKTNKGSYYLVAPAGTTWACNTGLTPCLSATVLNRTTDYCVLVELWPRVTYHPPSYVYSQFEKSYRHKREPVSLTLALLLGGLTMGGIAAGVGTGTTALVATQQFQQLHAAVQDDLKEVEKSITNLEKSLTSLSEVVLQNRRGLDLLFLKEGGLCAALKEECCFYADHTGLVRDSMAKLRERLTQRQKLFESSQGWFEGLFNRSPWFTTLISTIMGPLIILLLILLFGPCILNRLVQFVKDRISVVQALVLTQQYHQLKPLEYEPQ.

A signal peptide spans 1–32 (MACSTFSKPLKDKINPWGPLIILGILIRAGVS). Residues 32–236 (SVQHDSPHKV…RVLNIGPRVP (205 aa)) form a receptor-binding domain (RBD) region. The Extracellular segment spans residues 33–584 (VQHDSPHKVF…FNRSPWFTTL (552 aa)). N-linked (GlcNAc...) asparagine; by host glycans are attached at residues Asn43 and Asn58. 2 disulfide bridges follow: Cys113/Cys130 and Cys122/Cys135. Residues 259-284 (RPPQPPPPGAASIVPETAPPSQQPGT) are disordered. The N-linked (GlcNAc...) asparagine; by host glycan is linked to Asn300. Disulfide bonds link Cys310–Cys313, Cys310–Cys537, and Cys529–Cys536. The CXXC motif lies at 310–313 (CWLC). 4 N-linked (GlcNAc...) asparagine; by host glycosylation sites follow: Asn332, Asn339, Asn372, and Asn408. A fusion peptide region spans residues 446 to 466 (VSLTLALLLGGLTMGGIAAGV). Positions 477–511 (QQFQQLHAAVQDDLKEVEKSITNLEKSLTSLSEVV) form a coiled coil. Positions 512 to 528 (LQNRRGLDLLFLKEGGL) are immunosuppression. A CX6CC motif is present at residues 529-537 (CAALKEECC). Residues 585–605 (ISTIMGPLIILLLILLFGPCI) traverse the membrane as a helical segment. Cys604 is lipidated: S-palmitoyl cysteine; by host. The Cytoplasmic segment spans residues 606 to 640 (LNRLVQFVKDRISVVQALVLTQQYHQLKPLEYEPQ). Positions 629 to 632 (YHQL) match the YXXL motif; contains endocytosis signal motif.

As to quaternary structure, the mature envelope protein (Env) consists of a trimer of SU-TM heterodimers attached by a labile interchain disulfide bond. In terms of processing, specific enzymatic cleavages in vivo yield mature proteins. Envelope glycoproteins are synthesized as an inactive precursor that is N-glycosylated and processed likely by host cell furin or by a furin-like protease in the Golgi to yield the mature SU and TM proteins. The cleavage site between SU and TM requires the minimal sequence [KR]-X-[KR]-R. The R-peptide is released from the C-terminus of the cytoplasmic tail of the TM protein upon particle formation as a result of proteolytic cleavage by the viral protease. Cleavage of this peptide is required for TM to become fusogenic. The CXXC motif is highly conserved across a broad range of retroviral envelope proteins. It is thought to participate in the formation of a labile disulfide bond possibly with the CX6CC motif present in the transmembrane protein. Isomerization of the intersubunit disulfide bond to an SU intrachain disulfide bond is thought to occur upon receptor recognition in order to allow membrane fusion. Post-translationally, the transmembrane protein is palmitoylated. In terms of processing, the R-peptide is palmitoylated.

It is found in the virion membrane. The protein resides in the host cell membrane. In terms of biological role, the surface protein (SU) attaches the virus to the host cell by binding to its receptor. This interaction triggers the refolding of the transmembrane protein (TM) and is thought to activate its fusogenic potential by unmasking its fusion peptide. Fusion occurs at the host cell plasma membrane. The transmembrane protein (TM) acts as a class I viral fusion protein. Under the current model, the protein has at least 3 conformational states: pre-fusion native state, pre-hairpin intermediate state, and post-fusion hairpin state. During viral and target cell membrane fusion, the coiled coil regions (heptad repeats) assume a trimer-of-hairpins structure, positioning the fusion peptide in close proximity to the C-terminal region of the ectodomain. The formation of this structure appears to drive apposition and subsequent fusion of viral and target cell membranes. Membranes fusion leads to delivery of the nucleocapsid into the cytoplasm. The sequence is that of Envelope glycoprotein (env) from Rauscher mink cell focus-inducing virus.